Here is a 192-residue protein sequence, read N- to C-terminus: MKIGVLALQGDFDAHRQVLERLGADVVMVRKPEQLREIEGLVIPGGESSTFLKLLGDAGFEELRKFVTTKPSFGTCAGAIMLAKQVENPAQKGTGALDIRVRRNAYGRQIESAILTSECSLPGGEMEMVYIRAPRIEEVGPGVEVLAKRDGHPVLVRQGKVLAATFHPELTGDTRVHELFLKMVRNGNSGEK.

46–48 contacts L-glutamine; the sequence is GES. The Nucleophile role is filled by cysteine 76. L-glutamine contacts are provided by residues arginine 103 and 131–132; that span reads IR. Active-site charge relay system residues include histidine 167 and glutamate 169.

It belongs to the glutaminase PdxT/SNO family. In the presence of PdxS, forms a dodecamer of heterodimers. Only shows activity in the heterodimer.

The catalysed reaction is aldehydo-D-ribose 5-phosphate + D-glyceraldehyde 3-phosphate + L-glutamine = pyridoxal 5'-phosphate + L-glutamate + phosphate + 3 H2O + H(+). The enzyme catalyses L-glutamine + H2O = L-glutamate + NH4(+). Its pathway is cofactor biosynthesis; pyridoxal 5'-phosphate biosynthesis. Its function is as follows. Catalyzes the hydrolysis of glutamine to glutamate and ammonia as part of the biosynthesis of pyridoxal 5'-phosphate. The resulting ammonia molecule is channeled to the active site of PdxS. In Koribacter versatilis (strain Ellin345), this protein is Pyridoxal 5'-phosphate synthase subunit PdxT.